A 256-amino-acid chain; its full sequence is Geranylgeranylglyceryl phosphate synthase (256 aa).

Residues Asp28 and Ser53 each coordinate Mg(2+). Sn-glycerol 1-phosphate is bound by residues 172–178, 203–204, and 225–226; these read YLEAGSG, GG, and GT.

This sequence belongs to the GGGP/HepGP synthase family. Group II subfamily. Requires Mg(2+) as cofactor.

Its subcellular location is the cytoplasm. It carries out the reaction sn-glycerol 1-phosphate + (2E,6E,10E)-geranylgeranyl diphosphate = sn-3-O-(geranylgeranyl)glycerol 1-phosphate + diphosphate. The protein operates within membrane lipid metabolism; glycerophospholipid metabolism. In terms of biological role, prenyltransferase that catalyzes the transfer of the geranylgeranyl moiety of geranylgeranyl diphosphate (GGPP) to the C3 hydroxyl of sn-glycerol-1-phosphate (G1P). This reaction is the first ether-bond-formation step in the biosynthesis of archaeal membrane lipids. This Methanococcus maripaludis (strain DSM 14266 / JCM 13030 / NBRC 101832 / S2 / LL) protein is Geranylgeranylglyceryl phosphate synthase.